A 103-amino-acid chain; its full sequence is Conantokin R1-A (103 aa).

The first 21 residues, 1–21, serve as a signal peptide directing secretion; sequence MQLYTYLYLLVPLVTFHLILG. The propeptide occupies 22–79; it reads TGTLDHGGALTERRSTDATALKPEPVLQKSAARSTDDNGKDRLTQMKRILKKRGNNPR. A disordered region spans residues 34 to 83; the sequence is RRSTDATALKPEPVLQKSAARSTDDNGKDRLTQMKRILKKRGNNPRADEE. Residues 55-65 show a composition bias toward basic and acidic residues; the sequence is STDDNGKDRLT. 4-carboxyglutamate occurs at positions 82, 83, and 89.

This sequence belongs to the conotoxin B superfamily. The cofactor is Ca(2+). Mg(2+) serves as cofactor. As to expression, expressed by the venom duct.

It localises to the secreted. Functionally, conantokins inhibit N-methyl-D-aspartate (NMDA) receptors. This toxin has the highest potency for the NR2B/GRIN2B subunit (IC(50)=0.11 uM), followed by NR2D/GRIN2D (IC(50)=0.48 uM), NR2A/GRIN2A (IC(50)=2.1 uM), and NR2C/GRIN2C (IC(50)=6.1 uM) subunits when tested on rat receptors. In Conus rolani (Cone snail), this protein is Conantokin R1-A.